The chain runs to 215 residues: LexA repressor (215 aa).

A DNA-binding region (H-T-H motif) is located at residues 28–48; it reads RAEIAAELGFSSPNAAEEHLR. Residues Ser-133 and Lys-170 each act as for autocatalytic cleavage activity in the active site.

Belongs to the peptidase S24 family. In terms of assembly, homodimer.

The enzyme catalyses Hydrolysis of Ala-|-Gly bond in repressor LexA.. In terms of biological role, represses a number of genes involved in the response to DNA damage (SOS response), including recA and lexA. In the presence of single-stranded DNA, RecA interacts with LexA causing an autocatalytic cleavage which disrupts the DNA-binding part of LexA, leading to derepression of the SOS regulon and eventually DNA repair. The protein is LexA repressor of Burkholderia ambifaria (strain ATCC BAA-244 / DSM 16087 / CCUG 44356 / LMG 19182 / AMMD) (Burkholderia cepacia (strain AMMD)).